A 504-amino-acid chain; its full sequence is MWIFYFPAVISVLIVSLYFYFTRTFNYWKKRNVRGPEPTVFFGNLKDSALPRKNMGVVMEELYNMFPEEKVIGIYRMTSPCLLVRDLEVIKHIMIKDFEVFSDRGVEFSKEGLGSNLFHADGETWRALRNRFTPIFTSGKPKNMFYLMHEGADNFIDHVSAECEKNQEFEVHSLLQTYTMSTIAACAFGISYDSIGDKVKALDIVDKIISEPSYAIELDMMYPGLLSKLNLSIFPTAVKNFFKSLVDNIVAQRNGKPSGRNDFMDLILELRQLGEVTSNKYGSSASSLEITDEVICAQAFVFYIAGYETSATTMAYMIYQLALSPDIQNKLIAEVDEVLKANDGKVTYDTVKEMKYMNKAFDETLRMYSIVEPLQRKATRDYKIPGTDVVIEKDTIVLISPRGIHYDPKYYDNPKQFNPDRFDAEEVGKRHPCAYLPFGLGQRNCIGMRFGRLQSLLCITKILSKFRIEPSKNTDRNLQVEPHRGLIGPKGGIRVNVVPRKLVS.

C445 provides a ligand contact to heme.

This sequence belongs to the cytochrome P450 family. It depends on heme as a cofactor.

It is found in the endoplasmic reticulum membrane. The protein resides in the microsome membrane. It carries out the reaction an organic molecule + reduced [NADPH--hemoprotein reductase] + O2 = an alcohol + oxidized [NADPH--hemoprotein reductase] + H2O + H(+). The polypeptide is Cytochrome P450 6B6 (CYP6B6) (Helicoverpa armigera (Cotton bollworm)).